The chain runs to 426 residues: Probable indole-3-pyruvate monooxygenase YUCCA8 (426 aa).

Residue 29-34 participates in FAD binding; that stretch reads GAGPSG. 199 to 204 serves as a coordination point for NADP(+); it reads GCGNSG.

The protein belongs to the FMO family. Requires FAD as cofactor. Expressed in root tips and in hydathodes. Expressed in root vasculature and quiescent center, but not in the meristematic zone of the root tip.

It catalyses the reaction indole-3-pyruvate + NADPH + O2 + H(+) = (indol-3-yl)acetate + CO2 + NADP(+) + H2O. It functions in the pathway plant hormone metabolism; auxin biosynthesis. Its function is as follows. Involved in auxin biosynthesis. Belongs to the set of redundant YUCCA genes probably responsible for auxin biosynthesis in roots. The sequence is that of Probable indole-3-pyruvate monooxygenase YUCCA8 (YUC8) from Arabidopsis thaliana (Mouse-ear cress).